A 608-amino-acid chain; its full sequence is Protein UL27 (608 aa).

Residues 1–13 show a composition bias toward pro residues; it reads MNPVDQPPPPPLT. The segment at 1 to 33 is disordered; that stretch reads MNPVDQPPPPPLTQQPEEQAKEDHDDGDERLFR. Positions 18-33 are enriched in basic and acidic residues; it reads EQAKEDHDDGDERLFR.

This sequence belongs to the herpesviridae U4 family. As to quaternary structure, interacts with host KAT5, PSME3 and EP400.

The protein localises to the host nucleus. It localises to the host nucleolus. Its function is as follows. Promotes a cell cycle arrest in G0/G1 by inducing the proteasomal degradation of host histone acetyltransferase KAT5/Tip60. This Homo sapiens (Human) protein is Protein UL27 (UL27).